The sequence spans 156 residues: Small ribosomal subunit protein uS7 (156 aa).

The protein belongs to the universal ribosomal protein uS7 family. In terms of assembly, part of the 30S ribosomal subunit. Contacts proteins S9 and S11.

In terms of biological role, one of the primary rRNA binding proteins, it binds directly to 16S rRNA where it nucleates assembly of the head domain of the 30S subunit. Is located at the subunit interface close to the decoding center, probably blocks exit of the E-site tRNA. In Photorhabdus laumondii subsp. laumondii (strain DSM 15139 / CIP 105565 / TT01) (Photorhabdus luminescens subsp. laumondii), this protein is Small ribosomal subunit protein uS7.